Consider the following 140-residue polypeptide: ATP synthase epsilon chain (140 aa).

It belongs to the ATPase epsilon chain family. In terms of assembly, F-type ATPases have 2 components, CF(1) - the catalytic core - and CF(0) - the membrane proton channel. CF(1) has five subunits: alpha(3), beta(3), gamma(1), delta(1), epsilon(1). CF(0) has three main subunits: a, b and c.

It localises to the cell inner membrane. Produces ATP from ADP in the presence of a proton gradient across the membrane. This Neisseria meningitidis serogroup C / serotype 2a (strain ATCC 700532 / DSM 15464 / FAM18) protein is ATP synthase epsilon chain.